Here is a 165-residue protein sequence, read N- to C-terminus: SsrA-binding protein (165 aa).

Over residues 1 to 10 (MSKKGKKKSK) the composition is skewed to basic residues. Residues 1–21 (MSKKGKKKSKNNSSVDGNRRL) are disordered.

The protein belongs to the SmpB family.

It localises to the cytoplasm. In terms of biological role, required for rescue of stalled ribosomes mediated by trans-translation. Binds to transfer-messenger RNA (tmRNA), required for stable association of tmRNA with ribosomes. tmRNA and SmpB together mimic tRNA shape, replacing the anticodon stem-loop with SmpB. tmRNA is encoded by the ssrA gene; the 2 termini fold to resemble tRNA(Ala) and it encodes a 'tag peptide', a short internal open reading frame. During trans-translation Ala-aminoacylated tmRNA acts like a tRNA, entering the A-site of stalled ribosomes, displacing the stalled mRNA. The ribosome then switches to translate the ORF on the tmRNA; the nascent peptide is terminated with the 'tag peptide' encoded by the tmRNA and targeted for degradation. The ribosome is freed to recommence translation, which seems to be the essential function of trans-translation. This chain is SsrA-binding protein, found in Prochlorococcus marinus (strain NATL1A).